The chain runs to 118 residues: Myotrophin (118 aa).

Cys2 carries the N-acetylcysteine modification. The stretch at 2–30 (CDKEFMWALKNGDLDEVKDYVAKGEDVNR) is one ANK 1 repeat. Lys4, Lys11, and Lys24 each carry N6-acetyllysine. Thr31 carries the phosphothreonine modification. ANK repeat units lie at residues 34–66 (GGRKPLHYAADCGQLEILEFLLLKGADINAPDK) and 67–99 (HHITPLLSAVYEGHVSCVKLLLSKGADKTVKGP).

It belongs to the myotrophin family. Interacts with the heterodimer formed by CAPZA1 and CAPZB. Interacts with RELA.

It is found in the cytoplasm. Its subcellular location is the nucleus. The protein resides in the perinuclear region. Its function is as follows. Plays a role in the regulation of the growth of actin filaments. Inhibits the activity of the F-actin-capping protein complex formed by the CAPZA1 and CAPZB heterodimer. Promotes dimerization of NF-kappa-B subunits and regulates NF-kappa-B transcription factor activity. Promotes growth of cardiomyocytes, but not cardiomyocyte proliferation. Promotes cardiac muscle hypertrophy. This Rattus norvegicus (Rat) protein is Myotrophin (Mtpn).